A 319-amino-acid chain; its full sequence is MSELFWFEKYRPRSFDEVVDLEEVKARLRQFVKAGNMPHLLFYGPPGTGKTTMALVLARELYGEYWRENTLELNASDERGINVIRERVKEFARTAPVGKAPFKLVILDEADNMTSDAQQALRRIMEIYAQNTRFILLANYVSGIIEPIQSRTVMIRFSPLPKEAVFARLRYIAENEGVKVSDDALEAIYEFTQGDMRRAINALQIAATVSKAVTEEVVAKALGMVSPRLLRETLYEAVKGSFGKAATQIYGFVADGGVGELEIIKQIHREMLRLDVQEYVKPEIAYIIAEAHYAILRGAHGLTQIYGALAKVRRLLKSV.

44–51 contributes to the ATP binding site; that stretch reads GPPGTGKT.

Belongs to the activator 1 small subunits family. RfcS subfamily. As to quaternary structure, heteromultimer composed of small subunits (RfcS) and large subunits (RfcL).

Part of the RFC clamp loader complex which loads the PCNA sliding clamp onto DNA. In Pyrobaculum aerophilum (strain ATCC 51768 / DSM 7523 / JCM 9630 / CIP 104966 / NBRC 100827 / IM2), this protein is Replication factor C small subunit 2.